Reading from the N-terminus, the 349-residue chain is Phosphoribosylformylglycinamidine cyclo-ligase (349 aa).

It belongs to the AIR synthase family.

It localises to the cytoplasm. The catalysed reaction is 2-formamido-N(1)-(5-O-phospho-beta-D-ribosyl)acetamidine + ATP = 5-amino-1-(5-phospho-beta-D-ribosyl)imidazole + ADP + phosphate + H(+). The protein operates within purine metabolism; IMP biosynthesis via de novo pathway; 5-amino-1-(5-phospho-D-ribosyl)imidazole from N(2)-formyl-N(1)-(5-phospho-D-ribosyl)glycinamide: step 2/2. The chain is Phosphoribosylformylglycinamidine cyclo-ligase from Listeria monocytogenes serotype 4b (strain CLIP80459).